The following is a 154-amino-acid chain: Endoribonuclease YbeY (154 aa).

Positions 117, 121, and 127 each coordinate Zn(2+).

This sequence belongs to the endoribonuclease YbeY family. The cofactor is Zn(2+).

The protein localises to the cytoplasm. Single strand-specific metallo-endoribonuclease involved in late-stage 70S ribosome quality control and in maturation of the 3' terminus of the 16S rRNA. In Mycoplasma pneumoniae (strain ATCC 29342 / M129 / Subtype 1) (Mycoplasmoides pneumoniae), this protein is Endoribonuclease YbeY.